Reading from the N-terminus, the 269-residue chain is Ribosomal RNA small subunit methyltransferase J (269 aa).

S-adenosyl-L-methionine is bound by residues 124 to 125 and Asp188; that span reads ER.

This sequence belongs to the methyltransferase superfamily. RsmJ family.

It is found in the cytoplasm. It catalyses the reaction guanosine(1516) in 16S rRNA + S-adenosyl-L-methionine = N(2)-methylguanosine(1516) in 16S rRNA + S-adenosyl-L-homocysteine + H(+). Functionally, specifically methylates the guanosine in position 1516 of 16S rRNA. The protein is Ribosomal RNA small subunit methyltransferase J of Saccharophagus degradans (strain 2-40 / ATCC 43961 / DSM 17024).